The sequence spans 177 residues: Large ribosomal subunit protein uL6 (177 aa).

The protein belongs to the universal ribosomal protein uL6 family. As to quaternary structure, part of the 50S ribosomal subunit.

Functionally, this protein binds to the 23S rRNA, and is important in its secondary structure. It is located near the subunit interface in the base of the L7/L12 stalk, and near the tRNA binding site of the peptidyltransferase center. This chain is Large ribosomal subunit protein uL6, found in Acidovorax ebreus (strain TPSY) (Diaphorobacter sp. (strain TPSY)).